The sequence spans 151 residues: Ribosome maturation factor RimP (151 aa).

The protein belongs to the RimP family.

The protein resides in the cytoplasm. Functionally, required for maturation of 30S ribosomal subunits. The chain is Ribosome maturation factor RimP from Haemophilus influenzae (strain 86-028NP).